The primary structure comprises 188 residues: Ubiquitin-conjugating enzyme E2-21 kDa (188 aa).

In terms of domain architecture, UBC core spans 3–182; that stretch reads STEKRLLKEY…VHYYIAKYSA (180 aa). The active-site Glycyl thioester intermediate is C119.

This sequence belongs to the ubiquitin-conjugating enzyme family.

It catalyses the reaction S-ubiquitinyl-[E1 ubiquitin-activating enzyme]-L-cysteine + [E2 ubiquitin-conjugating enzyme]-L-cysteine = [E1 ubiquitin-activating enzyme]-L-cysteine + S-ubiquitinyl-[E2 ubiquitin-conjugating enzyme]-L-cysteine.. It participates in protein modification; protein ubiquitination. In terms of biological role, catalyzes the covalent attachment of ubiquitin to other proteins. Essential for peroxisome biogenesis. Required for UBC4-independent ubiquitination of PEX5. In Pichia angusta (Yeast), this protein is Ubiquitin-conjugating enzyme E2-21 kDa (PEX4).